The primary structure comprises 373 residues: tRNA pseudouridine synthase Pus10 (373 aa).

Aspartate 197 acts as the Nucleophile in catalysis. Substrate is bound by residues tyrosine 265 and tyrosine 336.

The protein belongs to the pseudouridine synthase Pus10 family.

The enzyme catalyses uridine(54) in tRNA = pseudouridine(54) in tRNA. The catalysed reaction is uridine(55) in tRNA = pseudouridine(55) in tRNA. Its function is as follows. Responsible for synthesis of pseudouridine from uracil-54 and uracil-55 in the psi GC loop of transfer RNAs. The sequence is that of tRNA pseudouridine synthase Pus10 from Korarchaeum cryptofilum (strain OPF8).